The following is a 389-amino-acid chain: NAD-dependent protein deacetylase sirtuin-2 (389 aa).

Positions 1–34 are disordered; that stretch reads MAEPDPSHPLETQAGKVQEAQDSDSDSEGGAAGG. N-acetylalanine is present on A2. 3 positions are modified to phosphoserine: S23, S25, and S27. The Nuclear export signal motif lies at 41 to 51; the sequence is LRNLFSQTLSL. S53 carries the post-translational modification Phosphoserine. One can recognise a Deacetylase sirtuin-type domain in the interval 57–338; the sequence is RLLDELTLEG…LALAELLGWK (282 aa). NAD(+) contacts are provided by residues 85 to 89 and 95 to 97; these read AGIST and DFR. Residue S100 is modified to Phosphoserine. An NAD(+)-binding site is contributed by 167–170; sequence QNID. The active-site Proton acceptor is H187. The Zn(2+) site is built by C195 and C200. Residue S207 is modified to Phosphoserine. Residues C221 and C224 each contribute to the Zn(2+) site. NAD(+) contacts are provided by residues 262-263, 286-288, and C324; these read TS and NKE. The interval 351-389 is disordered; the sequence is SIDAQSGAGVPNPSTSASPKKSPPPAKDEARTTEREKPQ. Residues 361–370 are compositionally biased toward low complexity; that stretch reads PNPSTSASPK. Position 368 is a phosphoserine; by CDK2 and CDK5 (S368). S372 bears the Phosphoserine mark. A compositionally biased stretch (basic and acidic residues) spans 376–389; the sequence is AKDEARTTEREKPQ.

This sequence belongs to the sirtuin family. Class I subfamily. In terms of assembly, interacts with CDC20, FOXO3 and FZR1. Associates with microtubules in primary cortical mature neurons. Homotrimer. Isoform 1 and isoform 2 interact (via both phosphorylated, unphosphorylated, active or inactive forms) with HDAC6; the interaction is necessary for the complex to interact with alpha-tubulin, suggesting that these proteins belong to a large complex that deacetylates the cytoskeleton. Interacts with FOXO1; the interaction is disrupted upon serum-starvation or oxidative stress, leading to increased level of acetylated FOXO1 and induction of autophagy. Interacts with RELA; the interaction occurs in the cytoplasm and is increased in a TNF-alpha-dependent manner. Interacts with HOXA10; the interaction is direct. Interacts with YWHAB and YWHAG; the interactions occur in a AKT-dependent manner and increase SIRT2-dependent TP53 deacetylation. Interacts with MAPK1/ERK2 and MAPK3/ERK1; the interactions increase SIRT2 stability and deacetylation activity. Interacts (phosphorylated form) with KMT5A isoform 2; the interaction is direct, stimulates KMT5A-mediated methyltransferase activity on histone at 'Lys-20' (H4K20me1) and is increased in a H(2)O(2)-induced oxidative stress-dependent manner. Interacts with G6PD; the interaction is enhanced by H(2)O(2) treatment. Interacts with a G1/S-specific cyclin E-CDK2 complex. Interacts with AURKA, CDK5R1 (p35 form) and CDK5 and HIF1A. Isoform 1, isoform 2 and isoform 5 interact (via C-terminus region) with EP300. Interacts with the tRNA ligase SARS1; recruited to the VEGFA promoter via interaction with SARS1. Interacts with BEX4; negatively regulates alpha-tubulin deacetylation by SIRT2. The cofactor is Zn(2+). In terms of processing, phosphorylated at phosphoserine and phosphothreonine. Phosphorylated at Ser-368 by a mitotic kinase CDK1/cyclin B at the G2/M transition; phosphorylation regulates the delay in cell-cycle progression. Phosphorylated at Ser-368 by a mitotic kinase G1/S-specific cyclin E/Cdk2 complex; phosphorylation inactivates SIRT2-mediated alpha-tubulin deacetylation and thereby negatively regulates cell adhesion, cell migration and neurite outgrowth during neuronal differentiation. Phosphorylated by cyclin A/Cdk2 and p35-Cdk5 complexes and to a lesser extent by the cyclin D3/Cdk4 and cyclin B/Cdk1, in vitro. Dephosphorylated at Ser-368 by CDC14A and CDC14B around early anaphase. Acetylated by EP300; acetylation leads both to the decreased of SIRT2-mediated alpha-tubulin deacetylase activity and SIRT2-mediated down-regulation of TP53 transcriptional activity. Post-translationally, ubiquitinated. In terms of tissue distribution, isoform 1 is expressed in heart, liver and skeletal muscle, weakly expressed in the cortex. Isoform 2 is strongly expressed in the cortex, weakly expressed in heart and liver. Weakly expressed in several malignancies including breast, liver, brain, kidney and prostate cancers compared to normal tissues. Weakly expressed in glioma cell lines compared to normal brain tissues (at protein level). Widely expressed. Highly expressed in heart, brain and skeletal muscle, while it is weakly expressed in placenta and lung. Down-regulated in many gliomas suggesting that it may act as a tumor suppressor gene in human gliomas possibly through the regulation of microtubule network.

It is found in the nucleus. The protein resides in the cytoplasm. It localises to the perinuclear region. The protein localises to the cytoskeleton. Its subcellular location is the microtubule organizing center. It is found in the centrosome. The protein resides in the centriole. It localises to the spindle. The protein localises to the midbody. Its subcellular location is the chromosome. It is found in the perikaryon. The protein resides in the cell projection. It localises to the growth cone. The protein localises to the myelin membrane. It catalyses the reaction N(6)-acetyl-L-lysyl-[protein] + NAD(+) + H2O = 2''-O-acetyl-ADP-D-ribose + nicotinamide + L-lysyl-[protein]. It carries out the reaction N(6)-tetradecanoyl-L-lysyl-[protein] + NAD(+) + H2O = 2''-O-tetradecanoyl-ADP-D-ribose + nicotinamide + L-lysyl-[protein]. The enzyme catalyses N(6)-hexadecanoyl-L-lysyl-[protein] + NAD(+) + H2O = 2''-O-hexadecanoyl-ADP-D-ribose + nicotinamide + L-lysyl-[protein]. Inhibited by Sirtinol, A3 and M15 small molecules. Inhibited by nicotinamide. Inhibited by a macrocyclic peptide inhibitor S2iL5. Inhibited by EP300-induced acetylation. Its function is as follows. NAD-dependent protein deacetylase, which deacetylates internal lysines on histone and alpha-tubulin as well as many other proteins such as key transcription factors. Participates in the modulation of multiple and diverse biological processes such as cell cycle control, genomic integrity, microtubule dynamics, cell differentiation, metabolic networks, and autophagy. Plays a major role in the control of cell cycle progression and genomic stability. Functions in the antephase checkpoint preventing precocious mitotic entry in response to microtubule stress agents, and hence allowing proper inheritance of chromosomes. Positively regulates the anaphase promoting complex/cyclosome (APC/C) ubiquitin ligase complex activity by deacetylating CDC20 and FZR1, then allowing progression through mitosis. Associates both with chromatin at transcriptional start sites (TSSs) and enhancers of active genes. Plays a role in cell cycle and chromatin compaction through epigenetic modulation of the regulation of histone H4 'Lys-20' methylation (H4K20me1) during early mitosis. Specifically deacetylates histone H4 at 'Lys-16' (H4K16ac) between the G2/M transition and metaphase enabling H4K20me1 deposition by KMT5A leading to ulterior levels of H4K20me2 and H4K20me3 deposition throughout cell cycle, and mitotic S-phase progression. Deacetylates KMT5A modulating KMT5A chromatin localization during the mitotic stress response. Also deacetylates histone H3 at 'Lys-57' (H3K56ac) during the mitotic G2/M transition. Upon bacterium Listeria monocytogenes infection, deacetylates 'Lys-18' of histone H3 in a receptor tyrosine kinase MET- and PI3K/Akt-dependent manner, thereby inhibiting transcriptional activity and promoting late stages of listeria infection. During oocyte meiosis progression, may deacetylate histone H4 at 'Lys-16' (H4K16ac) and alpha-tubulin, regulating spindle assembly and chromosome alignment by influencing microtubule dynamics and kinetochore function. Deacetylates histone H4 at 'Lys-16' (H4K16ac) at the VEGFA promoter and thereby contributes to regulate expression of VEGFA, a key regulator of angiogenesis. Deacetylates alpha-tubulin at 'Lys-40' and hence controls neuronal motility, oligodendroglial cell arbor projection processes and proliferation of non-neuronal cells. Phosphorylation at Ser-368 by a G1/S-specific cyclin E-CDK2 complex inactivates SIRT2-mediated alpha-tubulin deacetylation, negatively regulating cell adhesion, cell migration and neurite outgrowth during neuronal differentiation. Deacetylates PARD3 and participates in the regulation of Schwann cell peripheral myelination formation during early postnatal development and during postinjury remyelination. Involved in several cellular metabolic pathways. Plays a role in the regulation of blood glucose homeostasis by deacetylating and stabilizing phosphoenolpyruvate carboxykinase PCK1 activity in response to low nutrient availability. Acts as a key regulator in the pentose phosphate pathway (PPP) by deacetylating and activating the glucose-6-phosphate G6PD enzyme, and therefore, stimulates the production of cytosolic NADPH to counteract oxidative damage. Maintains energy homeostasis in response to nutrient deprivation as well as energy expenditure by inhibiting adipogenesis and promoting lipolysis. Attenuates adipocyte differentiation by deacetylating and promoting FOXO1 interaction to PPARG and subsequent repression of PPARG-dependent transcriptional activity. Plays a role in the regulation of lysosome-mediated degradation of protein aggregates by autophagy in neuronal cells. Deacetylates FOXO1 in response to oxidative stress or serum deprivation, thereby negatively regulating FOXO1-mediated autophagy. Deacetylates a broad range of transcription factors and co-regulators regulating target gene expression. Deacetylates transcriptional factor FOXO3 stimulating the ubiquitin ligase SCF(SKP2)-mediated FOXO3 ubiquitination and degradation. Deacetylates HIF1A and therefore promotes HIF1A degradation and inhibition of HIF1A transcriptional activity in tumor cells in response to hypoxia. Deacetylates RELA in the cytoplasm inhibiting NF-kappaB-dependent transcription activation upon TNF-alpha stimulation. Inhibits transcriptional activation by deacetylating p53/TP53 and EP300. Also deacetylates EIF5A. Functions as a negative regulator on oxidative stress-tolerance in response to anoxia-reoxygenation conditions. Plays a role as tumor suppressor. In addition to protein deacetylase activity, also has activity toward long-chain fatty acyl groups and mediates protein-lysine demyristoylation and depalmitoylation of target proteins, such as ARF6 and KRAS, thereby regulating their association with membranes. In terms of biological role, deacetylates EP300, alpha-tubulin and histone H3 and H4. Lacks deacetylation activity, at least toward known SIRT2 targets. The sequence is that of NAD-dependent protein deacetylase sirtuin-2 (SIRT2) from Homo sapiens (Human).